A 198-amino-acid chain; its full sequence is Large ribosomal subunit protein bL25 (198 aa).

This sequence belongs to the bacterial ribosomal protein bL25 family. CTC subfamily. In terms of assembly, part of the 50S ribosomal subunit; part of the 5S rRNA/L5/L18/L25 subcomplex. Contacts the 5S rRNA. Binds to the 5S rRNA independently of L5 and L18.

Its function is as follows. This is one of the proteins that binds to the 5S RNA in the ribosome where it forms part of the central protuberance. The chain is Large ribosomal subunit protein bL25 from Streptomyces coelicolor (strain ATCC BAA-471 / A3(2) / M145).